The chain runs to 206 residues: MAANKPKGQNSLALHKVIMVGSGGVGKSALTLQFMYDEFVEDYEPTKADSYRKKVVLDGEEVQIDILDTAGQEDYAAIRDNYFRSGEGFLCVFSITEMESFAATADFREQILRVKEDENVPFLLVGNKSDLEDKRQVSVEEAKNRADQWNVNYVETSAKTRANVDKVFFDLMREIRARKMEDSKEKNGKKKRKSLAKRIRERCCIL.

21 to 28 lines the GTP pocket; that stretch reads GSGGVGKS. The Effector region signature appears at 43–51; it reads YEPTKADSY. GTP contacts are provided by residues 68–72 and 127–130; these read DTAGQ and NKSD. S194 is subject to Phosphoserine. The residue at position 203 (C203) is a Cysteine methyl ester. C203 carries the S-geranylgeranyl cysteine lipid modification. Positions 204–206 are cleaved as a propeptide — removed in mature form; that stretch reads CIL.

Belongs to the small GTPase superfamily. Ras family. As to quaternary structure, interacts (via effector domain) with RALBP1; during mitosis, recruits RALBP1 to the mitochondrion where it promotes DNM1L phosphorylation and mitochondrial fission. Interacts with EXOC2/Sec5 and EXOC8/Exo84; binding to EXOC2 and EXOC8 is mutually exclusive. Interacts with Clostridium exoenzyme C3. Interacts with RALGPS1. Interacts with LPAR1 and LPAR2. Interacts with GRK2 in response to LPAR1 activation. RALA and GRK2 binding to LPAR1 is mutually exclusive. Interacts with CDC42. In terms of processing, prenylation is essential for membrane localization. Phosphorylated. Phosphorylation at Ser-194 by AURKA/Aurora kinase A, during mitosis, induces RALA localization to the mitochondrion where it regulates mitochondrial fission.

The protein resides in the cell membrane. The protein localises to the cleavage furrow. It is found in the midbody. It localises to the midbody ring. Its subcellular location is the mitochondrion. It catalyses the reaction GTP + H2O = GDP + phosphate + H(+). With respect to regulation, alternates between an inactive form bound to GDP and an active form bound to GTP. Activated by a guanine nucleotide-exchange factor (GEF) and inactivated by a GTPase-activating protein (GAP). Its function is as follows. Multifunctional GTPase involved in a variety of cellular processes including gene expression, cell migration, cell proliferation, oncogenic transformation and membrane trafficking. Accomplishes its multiple functions by interacting with distinct downstream effectors. Acts as a GTP sensor for GTP-dependent exocytosis of dense core vesicles. Key regulator of LPAR1 signaling and competes with GRK2 for binding to LPAR1 thus affecting the signaling properties of the receptor. Required for anchorage-independent proliferation of transformed cells. The RALA-exocyst complex regulates integrin-dependent membrane raft exocytosis and growth signaling. During mitosis, supports the stabilization and elongation of the intracellular bridge between dividing cells. Cooperates with EXOC2 to recruit other components of the exocyst to the early midbody. During mitosis, also controls mitochondrial fission by recruiting to the mitochondrion RALBP1, which mediates the phosphorylation and activation of DNM1L by the mitotic kinase cyclin B-CDK1. This Mus musculus (Mouse) protein is Ras-related protein Ral-A (Rala).